Here is a 303-residue protein sequence, read N- to C-terminus: N-acetyl-D-glucosamine kinase (303 aa).

Residues 4 to 11 and 133 to 140 each bind ATP; these read GFDIGGTK and GVGGGLVL. Zn(2+) is bound by residues H157, C177, C179, and C184.

Belongs to the ROK (NagC/XylR) family. NagK subfamily.

It carries out the reaction N-acetyl-D-glucosamine + ATP = N-acetyl-D-glucosamine 6-phosphate + ADP + H(+). It functions in the pathway cell wall biogenesis; peptidoglycan recycling. Functionally, catalyzes the phosphorylation of N-acetyl-D-glucosamine (GlcNAc) derived from cell-wall degradation, yielding GlcNAc-6-P. This Salmonella paratyphi A (strain ATCC 9150 / SARB42) protein is N-acetyl-D-glucosamine kinase.